The chain runs to 141 residues: Large ribosomal subunit protein uL11 (141 aa).

It belongs to the universal ribosomal protein uL11 family. As to quaternary structure, part of the ribosomal stalk of the 50S ribosomal subunit. Interacts with L10 and the large rRNA to form the base of the stalk. L10 forms an elongated spine to which L12 dimers bind in a sequential fashion forming a multimeric L10(L12)X complex. One or more lysine residues are methylated.

Functionally, forms part of the ribosomal stalk which helps the ribosome interact with GTP-bound translation factors. This is Large ribosomal subunit protein uL11 from Carboxydothermus hydrogenoformans (strain ATCC BAA-161 / DSM 6008 / Z-2901).